The primary structure comprises 206 residues: 2,3-bisphosphoglycerate-dependent phosphoglycerate mutase (206 aa).

Residues 9 to 16 (RHGQSEWN), 22 to 23 (TG), arginine 61, 88 to 91 (ERDY), lysine 99, 115 to 116 (RR), and 159 to 160 (GN) contribute to the substrate site. Catalysis depends on histidine 10, which acts as the Tele-phosphohistidine intermediate. The Proton donor/acceptor role is filled by glutamate 88.

Belongs to the phosphoglycerate mutase family. BPG-dependent PGAM subfamily. In terms of assembly, homodimer.

The catalysed reaction is (2R)-2-phosphoglycerate = (2R)-3-phosphoglycerate. Its pathway is carbohydrate degradation; glycolysis; pyruvate from D-glyceraldehyde 3-phosphate: step 3/5. Catalyzes the interconversion of 2-phosphoglycerate and 3-phosphoglycerate. The protein is 2,3-bisphosphoglycerate-dependent phosphoglycerate mutase of Chelativorans sp. (strain BNC1).